We begin with the raw amino-acid sequence, 505 residues long: Flagellin (505 aa).

Belongs to the bacterial flagellin family.

It is found in the secreted. The protein resides in the bacterial flagellum. Flagellin is the subunit protein which polymerizes to form the filaments of bacterial flagella. This Salmonella budapest protein is Flagellin (fliC).